Reading from the N-terminus, the 373-residue chain is Aromatic amino acid aminotransferase (373 aa).

Residue Lys-212 is modified to N6-(pyridoxal phosphate)lysine.

The protein belongs to the class-II pyridoxal-phosphate-dependent aminotransferase family. In terms of assembly, homodimer. The cofactor is pyridoxal 5'-phosphate.

It carries out the reaction an aromatic L-alpha-amino acid + 2-oxoglutarate = an aromatic oxo-acid + L-glutamate. In terms of biological role, aminotransferase that catalyzes the conversion of aromatic amino acids and 2-oxoglutarate into corresponding aromatic oxo acids and L-glutamate. This chain is Aromatic amino acid aminotransferase, found in Corynebacterium jeikeium (strain K411).